The sequence spans 120 residues: Large ribosomal subunit protein eL34 (120 aa).

This sequence belongs to the eukaryotic ribosomal protein eL34 family.

The chain is Large ribosomal subunit protein eL34 (RPL34) from Nicotiana tabacum (Common tobacco).